A 521-amino-acid polypeptide reads, in one-letter code: Cytochrome P450 monooxygenase ABA2 (521 aa).

The helical transmembrane segment at Ala15 to Leu35 threads the bilayer. An N-linked (GlcNAc...) asparagine glycan is attached at Asn366. Heme is bound at residue Cys458.

The protein belongs to the cytochrome P450 family. The cofactor is heme.

It is found in the membrane. It participates in hormone biosynthesis. Its function is as follows. Cytochrome P450 monooxygenase involved in the biosynthesis of abscisic acid (ABA), a phytohormone that acts antagonistically toward salicylic acid (SA), jasmonic acid (JA) and ethylene (ETH) signaling, to impede plant defense responses. During pathogen-host interaction, ABA plays a dual role in disease severity by increasing plant susceptibility and accelerating pathogenesis in the fungus itself. The first step of the pathway catalyzes the reaction from farnesyl diphosphate to alpha-ionylideneethane performed by the alpha-ionylideneethane synthase ABA3 via a three-step reaction mechanism involving 2 neutral intermediates, beta-farnesene and allofarnesene. The cytochrome P450 monooxygenase ABA1 might then be involved in the conversion of alpha-ionylideneethane to alpha-ionylideneacetic acid. Alpha-ionylideneacetic acid is further converted to abscisic acid in 2 steps involving the cytochrome P450 monooxygenase ABA2 and the short-chain dehydrogenase/reductase ABA4, via the intermediates 1'-deoxy-ABA or 1',4'-trans-diol-ABA, depending on the order of action of these 2 enzymes. ABA2 is responsible for the hydroxylation of carbon atom C-1' and ABA4 might be involved in the oxidation of the C-4' carbon atom. The sequence is that of Cytochrome P450 monooxygenase ABA2 from Pyricularia oryzae (strain 70-15 / ATCC MYA-4617 / FGSC 8958) (Rice blast fungus).